A 492-amino-acid chain; its full sequence is Catalase-1 (492 aa).

Active-site residues include H65 and N138. Heme is bound at residue Y348.

Belongs to the catalase family. In terms of assembly, homotetramer and heterotetramer. At least six or seven isozymes are produced from a mixture of 3 gene products. Interacts with NCA1. Interacts with LSD1. Heme is required as a cofactor.

It is found in the cytoplasm. The enzyme catalyses 2 H2O2 = O2 + 2 H2O. Occurs in almost all aerobically respiring organisms and serves to protect cells from the toxic effects of hydrogen peroxide. This chain is Catalase-1 (CAT1), found in Arabidopsis thaliana (Mouse-ear cress).